The primary structure comprises 391 residues: Pyruvate dehydrogenase E1 component subunit alpha, mitochondrial (391 aa).

Residues methionine 1 to leucine 26 constitute a mitochondrion transit peptide. Positions 92, 118, 119, 167, 169, 198, 199, 200, 227, and 229 each coordinate pyruvate. The thiamine diphosphate site is built by tyrosine 118, arginine 119, glycine 167, valine 169, aspartate 198, glycine 199, alanine 200, and asparagine 227. Aspartate 198 provides a ligand contact to Mg(2+). Residues asparagine 227 and tyrosine 229 each coordinate Mg(2+). Histidine 293 lines the thiamine diphosphate pocket. Residues serine 294–glutamine 313 are disordered. Residues arginine 303–glutamine 313 are compositionally biased toward basic and acidic residues.

Tetramer of 2 alpha and 2 beta subunits. It depends on thiamine diphosphate as a cofactor. Mg(2+) is required as a cofactor.

The protein resides in the mitochondrion matrix. It catalyses the reaction N(6)-[(R)-lipoyl]-L-lysyl-[protein] + pyruvate + H(+) = N(6)-[(R)-S(8)-acetyldihydrolipoyl]-L-lysyl-[protein] + CO2. E1 activity is regulated by phosphorylation (inactivation) and dephosphorylation (activation) of the alpha subunit. Functionally, the pyruvate dehydrogenase complex catalyzes the overall conversion of pyruvate to acetyl-CoA and CO(2). It contains multiple copies of three enzymatic components: pyruvate dehydrogenase (E1), dihydrolipoamide acetyltransferase (E2) and lipoamide dehydrogenase (E3). The protein is Pyruvate dehydrogenase E1 component subunit alpha, mitochondrial of Solanum tuberosum (Potato).